The sequence spans 454 residues: Chromosomal replication initiator protein DnaA (454 aa).

Residues 1-83 (MMTDSMRLVW…RPLKVLLEVA (83 aa)) form a domain I, interacts with DnaA modulators region. Residues 83 to 115 (AECVAEAPETPEEAPQQLCLPAFADIPRPSSGR) form a domain II region. The segment at 116 to 333 (LLNRDFTFDS…SGIKGLAARN (218 aa)) is domain III, AAA+ region. Positions 160, 162, 163, and 164 each coordinate ATP. Residues 334–454 (SIMGRGIDLK…LCGKIEAGEF (121 aa)) are domain IV, binds dsDNA.

It belongs to the DnaA family. In terms of assembly, oligomerizes as a right-handed, spiral filament on DNA at oriC.

The protein resides in the cytoplasm. In terms of biological role, plays an essential role in the initiation and regulation of chromosomal replication. ATP-DnaA binds to the origin of replication (oriC) to initiate formation of the DNA replication initiation complex once per cell cycle. Binds the DnaA box (a 9 base pair repeat at the origin) and separates the double-stranded (ds)DNA. Forms a right-handed helical filament on oriC DNA; dsDNA binds to the exterior of the filament while single-stranded (ss)DNA is stabiized in the filament's interior. The ATP-DnaA-oriC complex binds and stabilizes one strand of the AT-rich DNA unwinding element (DUE), permitting loading of DNA polymerase. After initiation quickly degrades to an ADP-DnaA complex that is not apt for DNA replication. Binds acidic phospholipids. The protein is Chromosomal replication initiator protein DnaA of Desulfatibacillum aliphaticivorans.